A 410-amino-acid polypeptide reads, in one-letter code: 23S rRNA (uracil(747)-C(5))-methyltransferase (410 aa).

Cys-61, Cys-67, Cys-70, and Cys-137 together coordinate [4Fe-4S] cluster. Gln-253, Tyr-279, Glu-300, and Asp-341 together coordinate S-adenosyl-L-methionine. Cys-367 functions as the Nucleophile in the catalytic mechanism.

The protein belongs to the class I-like SAM-binding methyltransferase superfamily. RNA M5U methyltransferase family.

It catalyses the reaction uridine(747) in 23S rRNA + S-adenosyl-L-methionine = 5-methyluridine(747) in 23S rRNA + S-adenosyl-L-homocysteine + H(+). With respect to regulation, activated by magnesium ions. Catalyzes the formation of 5-methyl-uridine at position equivalent to 747 (m5U747) in 23S rRNA (m5U859 in the P.abyssi numbering). The sequence is that of 23S rRNA (uracil(747)-C(5))-methyltransferase from Pyrococcus abyssi (strain GE5 / Orsay).